Reading from the N-terminus, the 160-residue chain is Cytochrome c-type biogenesis protein CcmE (160 aa).

Residues 1–8 lie on the Cytoplasmic side of the membrane; the sequence is MSAPRKTR. A helical; Signal-anchor for type II membrane protein transmembrane segment spans residues 9–29; that stretch reads LYAILAVICGAVLTVALTLYA. Over 30-160 the chain is Periplasmic; the sequence is LSSNIDLFYT…PAAVTEGKRL (131 aa). Heme is bound by residues histidine 130 and tyrosine 134.

Belongs to the CcmE/CycJ family.

The protein localises to the cell inner membrane. In terms of biological role, heme chaperone required for the biogenesis of c-type cytochromes. Transiently binds heme delivered by CcmC and transfers the heme to apo-cytochromes in a process facilitated by CcmF and CcmH. This Pectobacterium carotovorum subsp. carotovorum (strain PC1) protein is Cytochrome c-type biogenesis protein CcmE.